The following is an 826-amino-acid chain: Zinc phosphodiesterase ELAC protein 2 (826 aa).

Residues 1 to 16 (MWALCSLLRSAAGRTM) constitute a mitochondrion transit peptide. Disordered stretches follow at residues 16–51 (MSQG…PSGC) and 188–231 (EQRR…VSQR). A compositionally biased stretch (basic and acidic residues) spans 27–38 (ARRERPRKDPLR). Residues Ser199, Ser208, Ser212, Ser229, Ser618, and Ser736 each carry the phosphoserine modification. Basic and acidic residues predominate over residues 208–224 (SPERSSDSESNENEPHL). The tract at residues 798-826 (ELAGGLEDGEPQQKRAHTEEPQAKKVRAQ) is disordered. Basic and acidic residues predominate over residues 808–820 (PQQKRAHTEEPQA).

It belongs to the RNase Z family. In terms of assembly, homodimer. Interacts with PTCD1. Requires Zn(2+) as cofactor. As to expression, widely expressed. Highly expressed in heart, placenta, liver, skeletal muscle, kidney, pancreas, testis and ovary. Weakly expressed in brain, lung, spleen, thymus, prostate, small intestine, colon and leukocytes.

The protein resides in the mitochondrion. The protein localises to the mitochondrion matrix. It is found in the mitochondrion nucleoid. It localises to the nucleus. The enzyme catalyses Endonucleolytic cleavage of RNA, removing extra 3' nucleotides from tRNA precursor, generating 3' termini of tRNAs. A 3'-hydroxy group is left at the tRNA terminus and a 5'-phosphoryl group is left at the trailer molecule.. Its function is as follows. Zinc phosphodiesterase, which displays mitochondrial tRNA 3'-processing endonuclease activity. Involved in tRNA maturation, by removing a 3'-trailer from precursor tRNA. Associates with mitochondrial DNA complexes at the nucleoids to initiate RNA processing and ribosome assembly. The chain is Zinc phosphodiesterase ELAC protein 2 (ELAC2) from Homo sapiens (Human).